The primary structure comprises 193 residues: MHIVLASTSRYRQEIIARLGLPFCAEPPVCDETPLPGETALETAVRLARVKAQSLAGKHPEALIIGSDQVALLDDKQIGKPGGFEQGVEMLKWMSGRTVVFHSALALYNTASGRLQECVGITRVTLRRLTEAQIRNYLTREPDALHCAGSAKSEGLGGALLEKVESDDPNALIGVPLFQLITMLGNEGVEVLK.

Asp68 (proton acceptor) is an active-site residue.

Belongs to the Maf family. YceF subfamily. The cofactor is a divalent metal cation.

It is found in the cytoplasm. The enzyme catalyses N(7)-methyl-GTP + H2O = N(7)-methyl-GMP + diphosphate + H(+). In terms of biological role, nucleoside triphosphate pyrophosphatase that hydrolyzes 7-methyl-GTP (m(7)GTP). May have a dual role in cell division arrest and in preventing the incorporation of modified nucleotides into cellular nucleic acids. The chain is 7-methyl-GTP pyrophosphatase from Chromobacterium violaceum (strain ATCC 12472 / DSM 30191 / JCM 1249 / CCUG 213 / NBRC 12614 / NCIMB 9131 / NCTC 9757 / MK).